The primary structure comprises 139 residues: Nucleoside diphosphate kinase (139 aa).

6 residues coordinate ATP: K10, F58, R86, T92, R103, and N113. The active-site Pros-phosphohistidine intermediate is H116.

Belongs to the NDK family. In terms of assembly, homotetramer. It depends on Mg(2+) as a cofactor.

The protein resides in the cytoplasm. It carries out the reaction a 2'-deoxyribonucleoside 5'-diphosphate + ATP = a 2'-deoxyribonucleoside 5'-triphosphate + ADP. The enzyme catalyses a ribonucleoside 5'-diphosphate + ATP = a ribonucleoside 5'-triphosphate + ADP. Its function is as follows. Major role in the synthesis of nucleoside triphosphates other than ATP. The ATP gamma phosphate is transferred to the NDP beta phosphate via a ping-pong mechanism, using a phosphorylated active-site intermediate. The protein is Nucleoside diphosphate kinase of Oleidesulfovibrio alaskensis (strain ATCC BAA-1058 / DSM 17464 / G20) (Desulfovibrio alaskensis).